The following is a 340-amino-acid chain: MAEAITSVPAKSSLSAFWWASKHPPADPTTSFAGKTILITGPNAGLGYEAALKFAALGASQLIFGVRSLARGKEAKASIEAKTKCAPSVIHLLQLDMASYASIESFAREVNSKFPVVHAAVLNAGVAPPAYKRSPEGWEMALQVNVISTAYLAILLLPKLRATGIAAGEPTHLEFVTSVGHGDVAVETVRDARSILGKVNEEANFKFTAQYSITKLLEMWVMRHVAAAARSSEVIVNGACPSLCKSSLGRDFSIMLRAPDSLMKAIIGRTAEQGSRILVSAVTTGQKAHGGFWSHDRIAVPGVLVTSDEGKKLSEQFWKEILDELSKQNPDVEKLLSESS.

Positions 46, 71, 96, 123, 211, and 215 each coordinate NADP(+). Tyr211 functions as the Proton acceptor in the catalytic mechanism. Catalysis depends on Lys215, which acts as the Lowers pKa of active site Tyr.

This sequence belongs to the short-chain dehydrogenases/reductases (SDR) family.

It functions in the pathway mycotoxin biosynthesis. In terms of biological role, short-chain dehydrogenase/reductase; part of the gene cluster that mediates the biosynthesis of the cytotoxic leucine-containing cytochalasans, including aspochalasin C, aspochalasin E, TMC-169, flavichalasine F, aspergillin PZ, aspochalasin M and flavichalasine G. The first step in the pathway is catalyzed by the hybrid PKS-NRPS ffsA that utilizes 8 units of malonyl-CoA to iteratively assemble the octaketide chain before addition of L-leucine by the C-terminal NRPS modules. Because ffsA lacks a designated enoylreductase (ER) domain, the required activity is provided the enoyl reductase fssC. The methyltransferase (MT) domain of ffsA catalyzes the alpha-methylation at C10 and C14 using S-adenosyl-L-methionine as the methyl-donating cosubstrate. Reduction by the hydrolyase ffsE, followed by dehydration and intra-molecular Diels-Alder cyclization by the Diels-Alderase ffsF then yield the required isoindolone-fused macrocycle. A number of oxidative steps catalyzed by the tailoring cytochrome P450 monooxygenase ffsD, the FAD-linked oxidoreductase ffsJ and the short-chain dehydrogenase/reductase ffsI, are further required to afford the final products. This Aspergillus flavipes protein is Short-chain dehydrogenase/reductase ffsI.